A 476-amino-acid chain; its full sequence is Cys-Gly metallodipeptidase dug1 (476 aa).

Residue His-99 participates in Zn(2+) binding. The active site involves Asp-101. Position 133 (Asp-133) interacts with Zn(2+). The active-site Proton acceptor is Glu-167. Positions 168, 196, and 446 each coordinate Zn(2+).

This sequence belongs to the peptidase M20A family. In terms of assembly, homodimer. Component of the GSH degradosomal complex. It depends on Zn(2+) as a cofactor. Requires Mn(2+) as cofactor.

The protein resides in the cytoplasm. Catalytic component of the GSH degradosomal complex involved in the degradation of glutathione (GSH) and other peptides containing a gamma-glu-X bond. Has a Gly-Cys dipeptidase activity. In Schizosaccharomyces pombe (strain 972 / ATCC 24843) (Fission yeast), this protein is Cys-Gly metallodipeptidase dug1 (dug1).